The primary structure comprises 226 residues: Fibrillarin-like rRNA/tRNA 2'-O-methyltransferase (226 aa).

S-adenosyl-L-methionine is bound by residues 85 to 86 (TT), 104 to 105 (EF), 129 to 130 (DA), and 149 to 152 (DVAQ).

Belongs to the methyltransferase superfamily. Fibrillarin family. As to quaternary structure, interacts with nop5. Component of box C/D small ribonucleoprotein (sRNP) particles that contain rpl7ae, FlpA and nop5, plus a guide RNA.

Its function is as follows. Involved in pre-rRNA and tRNA processing. Utilizes the methyl donor S-adenosyl-L-methionine to catalyze the site-specific 2'-hydroxyl methylation of ribose moieties in rRNA and tRNA. Site specificity is provided by a guide RNA that base pairs with the substrate. Methylation occurs at a characteristic distance from the sequence involved in base pairing with the guide RNA. The chain is Fibrillarin-like rRNA/tRNA 2'-O-methyltransferase from Thermococcus gammatolerans (strain DSM 15229 / JCM 11827 / EJ3).